The following is a 474-amino-acid chain: Serine--tRNA ligase (474 aa).

Position 278–280 (278–280 (TAE)) interacts with L-serine. 309–311 (RSE) contacts ATP. Residue E332 coordinates L-serine. 396-399 (EISS) provides a ligand contact to ATP. S432 lines the L-serine pocket.

The protein belongs to the class-II aminoacyl-tRNA synthetase family. Type-1 seryl-tRNA synthetase subfamily. In terms of assembly, homodimer. The tRNA molecule binds across the dimer.

It is found in the cytoplasm. The catalysed reaction is tRNA(Ser) + L-serine + ATP = L-seryl-tRNA(Ser) + AMP + diphosphate + H(+). The enzyme catalyses tRNA(Sec) + L-serine + ATP = L-seryl-tRNA(Sec) + AMP + diphosphate + H(+). It functions in the pathway aminoacyl-tRNA biosynthesis; selenocysteinyl-tRNA(Sec) biosynthesis; L-seryl-tRNA(Sec) from L-serine and tRNA(Sec): step 1/1. Its function is as follows. Catalyzes the attachment of serine to tRNA(Ser). Is also able to aminoacylate tRNA(Sec) with serine, to form the misacylated tRNA L-seryl-tRNA(Sec), which will be further converted into selenocysteinyl-tRNA(Sec). The sequence is that of Serine--tRNA ligase from Caulobacter sp. (strain K31).